The primary structure comprises 250 residues: uncharacterized protein (250 aa).

The segment covering 207-226 (LNDRDAINKSEEARKAREEV) has biased composition (basic and acidic residues). A disordered region spans residues 207 to 250 (LNDRDAINKSEEARKAREEVFIPSEPSKPSIASKRSSASKSTKS). A compositionally biased stretch (low complexity) spans 233-250 (SKPSIASKRSSASKSTKS).

It is found in the plastid. Its subcellular location is the chloroplast. This is an uncharacterized protein from Chlorella vulgaris (Green alga).